A 285-amino-acid chain; its full sequence is Small ribosomal subunit biogenesis GTPase RsgA (285 aa).

Positions 61 to 215 (KNQLIRPKVA…IIDSPGFSSF (155 aa)) constitute a CP-type G domain. GTP contacts are provided by residues 110-113 (TKID) and 159-167 (GQTGVGKTS). Zn(2+)-binding residues include Cys239, Cys244, His246, and Cys254.

This sequence belongs to the TRAFAC class YlqF/YawG GTPase family. RsgA subfamily. Monomer. Associates with 30S ribosomal subunit, binds 16S rRNA. The cofactor is Zn(2+).

Its subcellular location is the cytoplasm. In terms of biological role, one of several proteins that assist in the late maturation steps of the functional core of the 30S ribosomal subunit. Helps release RbfA from mature subunits. May play a role in the assembly of ribosomal proteins into the subunit. Circularly permuted GTPase that catalyzes slow GTP hydrolysis, GTPase activity is stimulated by the 30S ribosomal subunit. The chain is Small ribosomal subunit biogenesis GTPase RsgA from Mesomycoplasma hyopneumoniae (strain J / ATCC 25934 / NCTC 10110) (Mycoplasma hyopneumoniae).